We begin with the raw amino-acid sequence, 360 residues long: Phospho-N-acetylmuramoyl-pentapeptide-transferase (360 aa).

Transmembrane regions (helical) follow at residues 25–45 (RAIL…PWVI), 74–94 (MGGA…SDFG), 97–117 (YVWV…VDDY), 134–154 (YFWQ…TAQA), 168–188 (VALN…VGTS), 199–219 (GLAI…AYLA), 236–256 (AGEL…FLWF), 263–283 (VFMG…VAVI), 288–308 (FVLF…ILQV), and 339–359 (IVRF…TLKF).

Belongs to the glycosyltransferase 4 family. MraY subfamily. Mg(2+) is required as a cofactor.

The protein localises to the cell inner membrane. It carries out the reaction UDP-N-acetyl-alpha-D-muramoyl-L-alanyl-gamma-D-glutamyl-meso-2,6-diaminopimeloyl-D-alanyl-D-alanine + di-trans,octa-cis-undecaprenyl phosphate = di-trans,octa-cis-undecaprenyl diphospho-N-acetyl-alpha-D-muramoyl-L-alanyl-D-glutamyl-meso-2,6-diaminopimeloyl-D-alanyl-D-alanine + UMP. The protein operates within cell wall biogenesis; peptidoglycan biosynthesis. Its function is as follows. Catalyzes the initial step of the lipid cycle reactions in the biosynthesis of the cell wall peptidoglycan: transfers peptidoglycan precursor phospho-MurNAc-pentapeptide from UDP-MurNAc-pentapeptide onto the lipid carrier undecaprenyl phosphate, yielding undecaprenyl-pyrophosphoryl-MurNAc-pentapeptide, known as lipid I. This Cellvibrio japonicus (strain Ueda107) (Pseudomonas fluorescens subsp. cellulosa) protein is Phospho-N-acetylmuramoyl-pentapeptide-transferase.